We begin with the raw amino-acid sequence, 236 residues long: Flagellar L-ring protein (236 aa).

Residues 1–24 (MKNKNRLNTIKLLSISLLIAVTTA) form the signal peptide. Cysteine 25 carries the N-palmitoyl cysteine lipid modification. Cysteine 25 is lipidated: S-diacylglycerol cysteine.

This sequence belongs to the FlgH family. The basal body constitutes a major portion of the flagellar organelle and consists of four rings (L,P,S, and M) mounted on a central rod.

Its subcellular location is the cell outer membrane. It is found in the bacterial flagellum basal body. In terms of biological role, assembles around the rod to form the L-ring and probably protects the motor/basal body from shearing forces during rotation. The protein is Flagellar L-ring protein of Colwellia psychrerythraea (strain 34H / ATCC BAA-681) (Vibrio psychroerythus).